A 149-amino-acid chain; its full sequence is 1,4-dihydroxy-2-naphthoyl-CoA hydrolase (149 aa).

Asp-19 is a catalytic residue.

It belongs to the 4-hydroxybenzoyl-CoA thioesterase family. DHNA-CoA hydrolase subfamily.

It carries out the reaction 1,4-dihydroxy-2-naphthoyl-CoA + H2O = 1,4-dihydroxy-2-naphthoate + CoA + H(+). It functions in the pathway cofactor biosynthesis; phylloquinone biosynthesis. The protein operates within quinol/quinone metabolism; 1,4-dihydroxy-2-naphthoate biosynthesis; 1,4-dihydroxy-2-naphthoate from chorismate: step 7/7. In terms of biological role, catalyzes the hydrolysis of 1,4-dihydroxy-2-naphthoyl-CoA (DHNA-CoA) to 1,4-dihydroxy-2-naphthoate (DHNA), a reaction involved in phylloquinone (vitamin K1) biosynthesis. The protein is 1,4-dihydroxy-2-naphthoyl-CoA hydrolase of Synechococcus sp. (strain CC9605).